The chain runs to 485 residues: WD repeat-containing protein 13 (485 aa).

Phosphoserine is present on residues serine 70, serine 74, and serine 79. Arginine 114 carries the post-translational modification Asymmetric dimethylarginine; alternate. Arginine 114 carries the omega-N-methylarginine; alternate modification. WD repeat units lie at residues 170-210 (HVDE…PTVL), 215-254 (GHTR…CIRE), 302-341 (KLTG…GKLT), 406-446 (HPVR…KAAV), and 451-484 (GHSA…RREQ).

It localises to the nucleus. The protein is WD repeat-containing protein 13 (WDR13) of Pongo abelii (Sumatran orangutan).